The primary structure comprises 382 residues: uncharacterized protein (382 aa).

The next 12 membrane-spanning stretches (helical) occupy residues 14–34 (GLLL…LWLA), 45–65 (VVSS…GYVI), 79–99 (FIFA…SWLA), 102–122 (FVAG…LMCS), 131–151 (LLAA…LLVS), 157–177 (LMSV…PLLF), 204–224 (LGVN…GLMP), 235–255 (ASIG…QWPI), 270–290 (VQVF…AMAP), 291–311 (ALFI…AWAC), 325–345 (ALLL…AMLM), and 348–368 (FSDN…LLML).

It belongs to the major facilitator superfamily. YcaD (TC 2.A.1.26) family.

Its subcellular location is the cell inner membrane. This is an uncharacterized protein from Shigella flexneri serotype 5b (strain 8401).